The chain runs to 271 residues: 3-deoxy-manno-octulosonate cytidylyltransferase (271 aa).

It belongs to the KdsB family.

It is found in the cytoplasm. It catalyses the reaction 3-deoxy-alpha-D-manno-oct-2-ulosonate + CTP = CMP-3-deoxy-beta-D-manno-octulosonate + diphosphate. It participates in nucleotide-sugar biosynthesis; CMP-3-deoxy-D-manno-octulosonate biosynthesis; CMP-3-deoxy-D-manno-octulosonate from 3-deoxy-D-manno-octulosonate and CTP: step 1/1. The protein operates within bacterial outer membrane biogenesis; lipopolysaccharide biosynthesis. In terms of biological role, activates KDO (a required 8-carbon sugar) for incorporation into bacterial lipopolysaccharide in Gram-negative bacteria. In Leptothrix cholodnii (strain ATCC 51168 / LMG 8142 / SP-6) (Leptothrix discophora (strain SP-6)), this protein is 3-deoxy-manno-octulosonate cytidylyltransferase.